A 131-amino-acid polypeptide reads, in one-letter code: Cyclin-dependent kinase 4 inhibitor B (131 aa).

ANK repeat units lie at residues 6 to 35 (GGDA…DPNR), 39 to 67 (FGRR…DPNC), 72 to 101 (TLTR…RLDV), and 105 to 131 (WGRL…TAGD).

The protein belongs to the CDKN2 cyclin-dependent kinase inhibitor family. As to quaternary structure, heterodimer of CDKN2B with CDK4 or CDK6.

Functionally, interacts strongly with CDK4 and CDK6. Potent inhibitor. Potential effector of TGF-beta induced cell cycle arrest. The protein is Cyclin-dependent kinase 4 inhibitor B (CDKN2B) of Bos taurus (Bovine).